The primary structure comprises 122 residues: Large ribosomal subunit protein uL14 (122 aa).

This sequence belongs to the universal ribosomal protein uL14 family. In terms of assembly, part of the 50S ribosomal subunit. Forms a cluster with proteins L3 and L19. In the 70S ribosome, L14 and L19 interact and together make contacts with the 16S rRNA in bridges B5 and B8.

Binds to 23S rRNA. Forms part of two intersubunit bridges in the 70S ribosome. In Thermosynechococcus vestitus (strain NIES-2133 / IAM M-273 / BP-1), this protein is Large ribosomal subunit protein uL14.